A 269-amino-acid polypeptide reads, in one-letter code: uncharacterized protein (269 aa).

103–110 (GIFTMGKS) is a binding site for ATP.

This is an uncharacterized protein from Mycoplasma pneumoniae (strain ATCC 29342 / M129 / Subtype 1) (Mycoplasmoides pneumoniae).